The primary structure comprises 158 residues: Acetolactate synthase small subunit (158 aa).

The ACT domain occupies 4–78 (ILSVLLENES…DVLRVIKVGQ (75 aa)).

Belongs to the acetolactate synthase small subunit family. As to quaternary structure, dimer of large and small chains.

It catalyses the reaction 2 pyruvate + H(+) = (2S)-2-acetolactate + CO2. Its pathway is amino-acid biosynthesis; L-isoleucine biosynthesis; L-isoleucine from 2-oxobutanoate: step 1/4. The protein operates within amino-acid biosynthesis; L-valine biosynthesis; L-valine from pyruvate: step 1/4. The protein is Acetolactate synthase small subunit (ilvH) of Buchnera aphidicola subsp. Schizaphis graminum (strain Sg).